A 440-amino-acid chain; its full sequence is Chromosome partition protein MukF (440 aa).

The leucine-zipper stretch occupies residues 208–236 (LSETSGTLRELQDTLEAAGDKLQANLLRI).

This sequence belongs to the MukF family. In terms of assembly, interacts, and probably forms a ternary complex, with MukE and MukB via its C-terminal region. The complex formation is stimulated by calcium or magnesium. It is required for an interaction between MukE and MukB.

The protein localises to the cytoplasm. The protein resides in the nucleoid. Its function is as follows. Involved in chromosome condensation, segregation and cell cycle progression. May participate in facilitating chromosome segregation by condensation DNA from both sides of a centrally located replisome during cell division. Not required for mini-F plasmid partitioning. Probably acts via its interaction with MukB and MukE. Overexpression results in anucleate cells. It has a calcium binding activity. The chain is Chromosome partition protein MukF from Photorhabdus laumondii subsp. laumondii (strain DSM 15139 / CIP 105565 / TT01) (Photorhabdus luminescens subsp. laumondii).